A 138-amino-acid chain; its full sequence is Putative pre-16S rRNA nuclease (138 aa).

It belongs to the YqgF nuclease family.

It is found in the cytoplasm. Functionally, could be a nuclease involved in processing of the 5'-end of pre-16S rRNA. The sequence is that of Putative pre-16S rRNA nuclease from Salmonella schwarzengrund (strain CVM19633).